Consider the following 517-residue polypeptide: Membrane-bound lytic murein transglycosylase F (517 aa).

The first 32 residues, 1 to 32 (MKKFKINYLLIGIVTLLLAAALWPSIPWFGKA), serve as a signal peptide directing secretion. Positions 33–269 (ENRIAAIQSR…RLEEKYLGHG (237 aa)) are non-LT domain. The tract at residues 270–517 (GDFDYVDTRS…PNTLVQAPRR (248 aa)) is LT domain. Glutamate 314 is an active-site residue.

It in the N-terminal section; belongs to the bacterial solute-binding protein 3 family. The protein in the C-terminal section; belongs to the transglycosylase Slt family.

It is found in the cell outer membrane. It carries out the reaction Exolytic cleavage of the (1-&gt;4)-beta-glycosidic linkage between N-acetylmuramic acid (MurNAc) and N-acetylglucosamine (GlcNAc) residues in peptidoglycan, from either the reducing or the non-reducing ends of the peptidoglycan chains, with concomitant formation of a 1,6-anhydrobond in the MurNAc residue.. Murein-degrading enzyme that degrades murein glycan strands and insoluble, high-molecular weight murein sacculi, with the concomitant formation of a 1,6-anhydromuramoyl product. Lytic transglycosylases (LTs) play an integral role in the metabolism of the peptidoglycan (PG) sacculus. Their lytic action creates space within the PG sacculus to allow for its expansion as well as for the insertion of various structures such as secretion systems and flagella. The sequence is that of Membrane-bound lytic murein transglycosylase F from Enterobacter sp. (strain 638).